The sequence spans 206 residues: Small ribosomal subunit protein uS4 (206 aa).

The S4 RNA-binding domain occupies 96–156 (SRLDNIVYRL…KKSKNQLRIK (61 aa)).

Belongs to the universal ribosomal protein uS4 family. As to quaternary structure, part of the 30S ribosomal subunit. Contacts protein S5. The interaction surface between S4 and S5 is involved in control of translational fidelity.

One of the primary rRNA binding proteins, it binds directly to 16S rRNA where it nucleates assembly of the body of the 30S subunit. Functionally, with S5 and S12 plays an important role in translational accuracy. The polypeptide is Small ribosomal subunit protein uS4 (Buchnera aphidicola subsp. Cinara cedri (strain Cc)).